The following is a 143-amino-acid chain: Small ribosomal subunit protein uS12 (143 aa).

The segment covering 1-20 (MGKPRGLRTARKHRSHRRDQ) has biased composition (basic residues). The interval 1–26 (MGKPRGLRTARKHRSHRRDQRWHDKD) is disordered. A Hydroxyproline modification is found at Pro62.

This sequence belongs to the universal ribosomal protein uS12 family. In terms of assembly, component of the 40S small ribosomal subunit.

The protein localises to the cytoplasm. It is found in the cytosol. It localises to the rough endoplasmic reticulum. In Dermacentor variabilis (American dog tick), this protein is Small ribosomal subunit protein uS12 (RpS23).